We begin with the raw amino-acid sequence, 263 residues long: Small ribosomal subunit protein eS4, X isoform (263 aa).

The 63-residue stretch at 42–104 (LPLIIFLRNR…TGEHFRLVYD (63 aa)) folds into the S4 RNA-binding domain. Residue Lys230 forms a Glycyl lysine isopeptide (Lys-Gly) (interchain with G-Cter in SUMO2) linkage. Lys233 carries the N6-acetyllysine modification.

The protein belongs to the eukaryotic ribosomal protein eS4 family. Component of the small ribosomal subunit. Part of the small subunit (SSU) processome, composed of more than 70 proteins and the RNA chaperone small nucleolar RNA (snoRNA) U3. Identified in a IGF2BP1-dependent mRNP granule complex containing untranslated mRNAs.

The protein resides in the cytoplasm. It localises to the nucleus. It is found in the nucleolus. Functionally, component of the small ribosomal subunit. The ribosome is a large ribonucleoprotein complex responsible for the synthesis of proteins in the cell. Part of the small subunit (SSU) processome, first precursor of the small eukaryotic ribosomal subunit. During the assembly of the SSU processome in the nucleolus, many ribosome biogenesis factors, an RNA chaperone and ribosomal proteins associate with the nascent pre-rRNA and work in concert to generate RNA folding, modifications, rearrangements and cleavage as well as targeted degradation of pre-ribosomal RNA by the RNA exosome. The chain is Small ribosomal subunit protein eS4, X isoform (RPS4X) from Monodelphis domestica (Gray short-tailed opossum).